Consider the following 614-residue polypeptide: Heat shock protein SSB1 (614 aa).

Residues 1 to 392 are nucleotide binding domain (NBD); sequence MSTEVYDGAI…ILSGKATSAE (392 aa). ATP contacts are provided by residues 16-18, K74, 206-208, 272-279, and G343; these read TTY, GGT, and ERAKRTLS. The segment at 393 to 403 is inter-domain linker; sequence TADLLLLDVVP. Positions 404 to 614 are substrate binding domain (SBD); it reads LSLGVAMEGN…RAVTKAMSSR (211 aa). Residues 517–613 are lid domain (SBDalpha); sequence TSEIENMISE…KRAVTKAMSS (97 aa). The short motif at 575–583 is the Nuclear export signal element; that stretch reads IENTMSEAM.

Belongs to the heat shock protein 70 family. In terms of assembly, interacts with HAT1 in starvation conditions.

Its subcellular location is the nucleus. It is found in the cytoplasm. It carries out the reaction ATP + H2O = ADP + phosphate + H(+). Its function is as follows. Chaperone that interacts with the histone acetyltransferase HAT1 and mediates its translocation from the nucleus to the cytoplasm during germination and starvation conditions. Within the cytoplasm, HAT1 regulates autophagy via acetylation of the autophagy-related proteins ATG3 and ATG9. This Pyricularia oryzae (strain 70-15 / ATCC MYA-4617 / FGSC 8958) (Rice blast fungus) protein is Heat shock protein SSB1.